We begin with the raw amino-acid sequence, 111 residues long: uncharacterized protein (111 aa).

Residues 81-101 form a helical membrane-spanning segment; it reads YFFLLFYVSFPHIFLGLFFFI.

Its subcellular location is the membrane. This is an uncharacterized protein from Schizosaccharomyces pombe (strain 972 / ATCC 24843) (Fission yeast).